Reading from the N-terminus, the 220-residue chain is 1-Cys peroxiredoxin B (220 aa).

Positions 4–165 constitute a Thioredoxin domain; sequence LTLGDVVPDL…VLRATDALLT (162 aa). The Cysteine sulfenic acid (-SOH) intermediate role is filled by Cys-46. The Bipartite nuclear localization signal signature appears at 195–218; sequence KARFPAGFETAQLPSNKCYLRFTQ.

Belongs to the peroxiredoxin family. Prx6 subfamily.

The protein localises to the nucleus. Its subcellular location is the cytoplasm. The catalysed reaction is a hydroperoxide + [thioredoxin]-dithiol = an alcohol + [thioredoxin]-disulfide + H2O. In terms of biological role, thiol-specific peroxidase that catalyzes the reduction of hydrogen peroxide and organic hydroperoxides to water and alcohols, respectively. Seems to contribute to the inhibition of germination during stress. The polypeptide is 1-Cys peroxiredoxin B (Oryza sativa subsp. japonica (Rice)).